Here is a 416-residue protein sequence, read N- to C-terminus: MTMIKIAQQAKQASFELAQFGNVQKNQALFSIADALEQRTEEILVVNAKDIDYAKSQGISEAIIDRLLLTPERIRGIANDVRNVASLADPVGQVIDGGVLDSGLKIERQRVPLGVILTIYEARPNVTIDVASLCLKTGNAVILRGGKETKFTNAILVEVVQSALEQAGLPKLAVQAVTDPDRALLLELLKLDQFIDMVIPRGGAGLHQFCKENSTIPVIVGGIGVCHLYVEASADLERSLNVIANAKTQRPSTCNTLETLLVDKAIADQFLPKLAEHLCKLKVTLHSDDFSEDLQKNPQIQPLEQAKLRQEWLSLDLSVVVVDGIQQAIEHIRTYGSQHSEGILTSNYALARQFVQQVDAAAVYINASTRFTDGAQFGLGAEVAVSTQKLHARGPMGLEALTTYKWVCEGDYLTRK.

This sequence belongs to the gamma-glutamyl phosphate reductase family.

The protein localises to the cytoplasm. The enzyme catalyses L-glutamate 5-semialdehyde + phosphate + NADP(+) = L-glutamyl 5-phosphate + NADPH + H(+). Its pathway is amino-acid biosynthesis; L-proline biosynthesis; L-glutamate 5-semialdehyde from L-glutamate: step 2/2. In terms of biological role, catalyzes the NADPH-dependent reduction of L-glutamate 5-phosphate into L-glutamate 5-semialdehyde and phosphate. The product spontaneously undergoes cyclization to form 1-pyrroline-5-carboxylate. The sequence is that of Gamma-glutamyl phosphate reductase from Glaesserella parasuis serovar 5 (strain SH0165) (Haemophilus parasuis).